A 1329-amino-acid chain; its full sequence is BRCT domain-containing protein At4g02110 (1329 aa).

BRCT domains lie at L7–Y97 and N104–I194. Disordered regions lie at residues A295–R378, G393–L470, E576–D645, N745–K827, and A952–K1077. Polar residues-rich tracts occupy residues S323–S335 and S363–R378. Composition is skewed to basic and acidic residues over residues V410 to S422 and R600 to T611. Over residues G793–I802 the composition is skewed to basic residues. 2 stretches are compositionally biased toward basic and acidic residues: residues D818–K827 and D971–V983. Residues S986–S1004 show a composition bias toward low complexity. Residues V1024–K1047 are compositionally biased toward basic and acidic residues. In terms of domain architecture, BRCT 3 spans F1090–W1181.

This Arabidopsis thaliana (Mouse-ear cress) protein is BRCT domain-containing protein At4g02110.